The following is a 749-amino-acid chain: MTGDPPERRSNGDRLPAERPPSNEGQTPPRKPGRNEPGSPPDWRVTPAPDGRGTPRRGRNGGGMRPFRFPGGRWGILVFILVLLGLNWWISSNALAPSERVRVPYSPNFIQQVRDGNVKEISSTGASIQGDFRADVTYPPKDDKDSVTAKKFSTEVPAFADTDELSKLLQDNDVTVNASPADNGPSLLVSILLGFGPVILIIALFVFLSRRMAGAAGGGMMSFGRSRARRSEGGEAQVTFRDVAGIDEAEAELNEIVDFLKNPQKYQRLGGKIPKGVLLSGQPGTGKTLLARAVAGEAGVPFFSMSASEFVEMIVGVGASRVRDLFRQAKEAAPAIIFIDELDAIGRARGGGRGSFGGNDEREQTLNQILTEMDGFEPTTAVIVIAATNRPEILDAALLRPGRFDRRVTVAAPDRNGRLMILKVHTRSVPLADDVDLESIASSTPGMVGADLANLVNEAALLAARRGHVKVTNSDVADALEKVVLGAERKVMMSDDDRRRTAYHESGHAIVGMLTAGADPVRKVSIIPRGQALGVTFSSPDADKYNYDERYLVGKIKVALGGRVAEEIVFGDLTTGAESDIQQLTGIARQMVGRWGMSRAIGPIAVLPSEGNGPLLPGVAETSESTQRLVDEEVRRIVDSAHAEVTRLLREHRANLDSLVAGLLDQETLDEADAYEAAGLEHMRPERVEPPAPRPSRRDGGRSVAAGPVPHGLEAPERPAQIAAPGADEPEPPTNGSGELGGSVRAGDA.

Basic and acidic residues predominate over residues 1–17 (MTGDPPERRSNGDRLPA). The interval 1–67 (MTGDPPERRS…GRNGGGMRPF (67 aa)) is disordered. Over 1 to 75 (MTGDPPERRS…PFRFPGGRWG (75 aa)) the chain is Cytoplasmic. The chain crosses the membrane as a helical span at residues 76 to 96 (ILVFILVLLGLNWWISSNALA). The Extracellular segment spans residues 97 to 186 (PSERVRVPYS…NASPADNGPS (90 aa)). Residues 187–207 (LLVSILLGFGPVILIIALFVF) form a helical membrane-spanning segment. Residues 208-749 (LSRRMAGAAG…LGGSVRAGDA (542 aa)) are Cytoplasmic-facing. 281–288 (GQPGTGKT) lines the ATP pocket. A Zn(2+)-binding site is contributed by histidine 504. The active site involves glutamate 505. The Zn(2+) site is built by histidine 508 and aspartate 580. The segment covering 679 to 689 (GLEHMRPERVE) has biased composition (basic and acidic residues). A disordered region spans residues 679 to 749 (GLEHMRPERV…LGGSVRAGDA (71 aa)).

This sequence in the central section; belongs to the AAA ATPase family. It in the C-terminal section; belongs to the peptidase M41 family. Homohexamer. Zn(2+) is required as a cofactor.

Its subcellular location is the cell membrane. Its function is as follows. Acts as a processive, ATP-dependent zinc metallopeptidase for both cytoplasmic and membrane proteins. Plays a role in the quality control of integral membrane proteins. The sequence is that of ATP-dependent zinc metalloprotease FtsH 3 from Conexibacter woesei (strain DSM 14684 / CCUG 47730 / CIP 108061 / JCM 11494 / NBRC 100937 / ID131577).